A 304-amino-acid chain; its full sequence is Oxygen-dependent coproporphyrinogen-III oxidase (304 aa).

Serine 93 is a binding site for substrate. A divalent metal cation is bound by residues histidine 97 and histidine 107. Histidine 107 (proton donor) is an active-site residue. Residue 109–111 coordinates substrate; that stretch reads NVR. A divalent metal cation-binding residues include histidine 146 and histidine 176. Residues 241 to 276 form an important for dimerization region; it reads YVEFNLVYDRGTLFGLQSGGRTESILMSLPPQVRWG. 259–261 is a binding site for substrate; the sequence is GGR.

It belongs to the aerobic coproporphyrinogen-III oxidase family. Homodimer. It depends on a divalent metal cation as a cofactor.

It localises to the cytoplasm. The catalysed reaction is coproporphyrinogen III + O2 + 2 H(+) = protoporphyrinogen IX + 2 CO2 + 2 H2O. It functions in the pathway porphyrin-containing compound metabolism; protoporphyrin-IX biosynthesis; protoporphyrinogen-IX from coproporphyrinogen-III (O2 route): step 1/1. In terms of biological role, involved in the heme biosynthesis. Catalyzes the aerobic oxidative decarboxylation of propionate groups of rings A and B of coproporphyrinogen-III to yield the vinyl groups in protoporphyrinogen-IX. This Pseudomonas savastanoi pv. phaseolicola (strain 1448A / Race 6) (Pseudomonas syringae pv. phaseolicola (strain 1448A / Race 6)) protein is Oxygen-dependent coproporphyrinogen-III oxidase.